The primary structure comprises 642 residues: MPCGEDWLSHPLGIVQGFFAQNGVTPDWEKKVIDYFKEKLKENNAPKWVPSLNEVPLHYLKPNSFVKFRCMIQDMFDPEFYMGVYETVNQNTKARVLHFGKYRDVAECGPQQELDLNSPRSTTSERQTFYCVPVPGESLWVKEAYVNANQARVSPSTSYTPSRHKRSYEDDEDMDLQPNKQKDQHSGARQAGGLGGLHWRGEPKRLETEASSGQQLNSLNLSSPFDLNFPLPGEKGPACLVKVYEDWDCFKVNDVLELYGVLSVDPILSILNNEERDASALLDPMECTDMAEEQRVHSPPASLVPRIHVILAQKLQHINPLLPTCLNKEESRTCQFVSNFMSELSPVRAELLGFLTHALLGDSLAAEYLILHLISTVYTRRDVLPLGKFTVNLSGCPQNSTFTEHLYRIIQHLVPASFRLQMTIENMNQLKLIPHKDYTANRLVSGLLQLPNNTSLVIDETLLEQGQLDTPGVHNVAALSNLITWQKVDYDFSYHQMEFPCNINVLITSEGRSLLPADCQIHLQPQLIPPNMEEYMNGLLSAVLPSVLNKFRIYLTLLRFLDYNLSDDITKAVEDDFVEMRKNDPQSITADDLHQLLVVARFLSLSAGQTTLSRERWLRAKQLEHSRRSRLQQQKSVNGNEL.

The segment covering 151-161 has biased composition (polar residues); sequence ARVSPSTSYTP. The interval 151-200 is disordered; the sequence is ARVSPSTSYTPSRHKRSYEDDEDMDLQPNKQKDQHSGARQAGGLGGLHWR. Serine 154 carries the phosphoserine modification. Threonine 160 carries the phosphothreonine modification. A phosphoserine mark is found at serine 167 and serine 298.

The protein belongs to the MCMBP family. As to quaternary structure, interacts with the MCM complex: associates with the MCM3-7 complex which lacks MCM2, while it does not interact with the MCM complex when MCM2 is present (MCM2-7 complex). Interacts with the RPA complex, when composed of all RPA1, RPA2 and RPA3 components, but not with RPA1 or RPA2 alone.

It localises to the nucleus. Functionally, associated component of the MCM complex that acts as a regulator of DNA replication. Binds to the MCM complex during late S phase and promotes the disassembly of the MCM complex from chromatin, thereby acting as a key regulator of pre-replication complex (pre-RC) unloading from replicated DNA. Can dissociate the MCM complex without addition of ATP; probably acts by destabilizing interactions of each individual subunits of the MCM complex. Required for sister chromatid cohesion. The chain is Mini-chromosome maintenance complex-binding protein (Mcmbp) from Rattus norvegicus (Rat).